Consider the following 587-residue polypeptide: Putative inactive receptor-like protein kinase At1g64210 (587 aa).

A signal peptide spans 1–19 (MQIFLFFFSLILCFVLISS). At 20–232 (QTLEDDKKAL…KTPFGLSQLA (213 aa)) the chain is on the extracellular side. N-linked (GlcNAc...) asparagine glycosylation is found at Asn-37 and Asn-44. 5 LRR repeats span residues 89–112 (SLKF…TNLK), 113–136 (SLTH…SELK), 137–160 (NLKV…SGLT), 161–183 (SLQV…HLPK), and 184–205 (LSQI…LQRF). 4 N-linked (GlcNAc...) asparagine glycosylation sites follow: Asn-149, Asn-169, Asn-188, and Asn-214. Residues 233–253 (FLLILSAACVLCVSGLSFIMI) form a helical membrane-spanning segment. The Cytoplasmic portion of the chain corresponds to 254–587 (TCFGKTRISG…IEDIRSVDAE (334 aa)). Residues 307 to 581 (SSSAEVLGKG…AQVLKLIEDI (275 aa)) form the Protein kinase domain. Ser-309 is modified (phosphoserine). ATP-binding positions include 313-321 (LGKGAFGTT) and Lys-335. Ser-386 is subject to Phosphoserine. 4 positions are modified to phosphothreonine: Thr-462, Thr-463, Thr-466, and Thr-477.

The protein resides in the cell membrane. In Arabidopsis thaliana (Mouse-ear cress), this protein is Putative inactive receptor-like protein kinase At1g64210.